A 544-amino-acid chain; its full sequence is MAAKQVLFSDEARAKMLDGVNTLANAVKVTLGPKGRNVVLDKSFGAPTITKDGVSVAKEIELEDKFENMGAQIVKEVASKTADVAGDGTTTATVLAQALLTEGLKAVAAGMNPMDLKRGIDKATAKLVEELKALSKPCSDPKSIEQVGTISANSDATVGKLIADAMAKVGKEGVITVEEGKGFEDELDVVEGMQFDRGYLSPYFATNQENMTTDLENPYILIVDKKISNIRDLLPVLEGVSKSGRALLIIAEDVESEALATLVVNNMRGVVKVCAVKAPGFGDRRKAMLEDIATLTGATFVSEDLSMKLEETNMEHLGTASRVQVTKDNTTIIDGAGEKEAIAKRINVIKANIAEANSDYDREKLQERLAKLSGGVAVIKVGAVTEAEMKEKKDRVDDALHATRAAVEEGIVAGGGVALIRAQKALDGLTGENDDQNHGIALLRKAIEAPLRQIVSNAGGESSVVVNQVKANQGNYGYNAANDTYGDMVEMGILDPTKVTRSALQHAASIAGLMITTEAMVGEIKEAAPAMPMGGGMGGMPGMM.

ATP is bound by residues 30–33, Lys51, 87–91, Gly415, 479–481, and Asp495; these read TLGP, DGTTT, and NAA.

Belongs to the chaperonin (HSP60) family. Forms a cylinder of 14 subunits composed of two heptameric rings stacked back-to-back. Interacts with the co-chaperonin GroES.

Its subcellular location is the cytoplasm. It carries out the reaction ATP + H2O + a folded polypeptide = ADP + phosphate + an unfolded polypeptide.. In terms of biological role, together with its co-chaperonin GroES, plays an essential role in assisting protein folding. The GroEL-GroES system forms a nano-cage that allows encapsulation of the non-native substrate proteins and provides a physical environment optimized to promote and accelerate protein folding. In Francisella tularensis subsp. novicida (strain U112), this protein is Chaperonin GroEL.